The primary structure comprises 89 residues: Small ribosomal subunit protein uS14 (89 aa).

The protein belongs to the universal ribosomal protein uS14 family. As to quaternary structure, part of the 30S ribosomal subunit. Contacts proteins S3 and S10.

Functionally, binds 16S rRNA, required for the assembly of 30S particles and may also be responsible for determining the conformation of the 16S rRNA at the A site. The protein is Small ribosomal subunit protein uS14 of Chlorobium limicola (strain DSM 245 / NBRC 103803 / 6330).